A 173-amino-acid chain; its full sequence is Large ribosomal subunit protein uL10 (173 aa).

Belongs to the universal ribosomal protein uL10 family. As to quaternary structure, part of the ribosomal stalk of the 50S ribosomal subunit. The N-terminus interacts with L11 and the large rRNA to form the base of the stalk. The C-terminus forms an elongated spine to which L12 dimers bind in a sequential fashion forming a multimeric L10(L12)X complex.

In terms of biological role, forms part of the ribosomal stalk, playing a central role in the interaction of the ribosome with GTP-bound translation factors. The protein is Large ribosomal subunit protein uL10 of Bifidobacterium animalis subsp. lactis (strain AD011).